We begin with the raw amino-acid sequence, 755 residues long: 1,4-alpha-glucan branching enzyme GlgB (755 aa).

The Nucleophile role is filled by aspartate 435. The active-site Proton donor is the glutamate 488.

This sequence belongs to the glycosyl hydrolase 13 family. GlgB subfamily. As to quaternary structure, monomer.

The catalysed reaction is Transfers a segment of a (1-&gt;4)-alpha-D-glucan chain to a primary hydroxy group in a similar glucan chain.. It functions in the pathway glycan biosynthesis; glycogen biosynthesis. In terms of biological role, catalyzes the formation of the alpha-1,6-glucosidic linkages in glycogen by scission of a 1,4-alpha-linked oligosaccharide from growing alpha-1,4-glucan chains and the subsequent attachment of the oligosaccharide to the alpha-1,6 position. The polypeptide is 1,4-alpha-glucan branching enzyme GlgB (Vibrio parahaemolyticus serotype O3:K6 (strain RIMD 2210633)).